The sequence spans 188 residues: Translation machinery-associated protein 22 (188 aa).

The SUI1 domain maps to 96–167 (VTIKRIERNK…EIEEFLLEKY (72 aa)).

It belongs to the DENR family. In terms of assembly, interacts with the 40S ribosomal subunit.

It is found in the cytoplasm. This Chaetomium globosum (strain ATCC 6205 / CBS 148.51 / DSM 1962 / NBRC 6347 / NRRL 1970) (Soil fungus) protein is Translation machinery-associated protein 22 (TMA22).